The chain runs to 327 residues: MMSGRPLHMETPVRDSMTLSKVAGTTAYLKLDSAQPSGSFKIRGIGHLCKMWAERGCEHFVCSSAGNAGMAAAYAARKLGIPSTIVVPSTTPALTIQRLKNEGATVKVVGETLDEAIRVAKDLEKNNSGWVYVPPFDDPLIWEGHSSIVKELKETMTEKPGAIVLAVGGGGLLCGVVQGLAEVGWRDVPVITMETIGAESFHASTKAGKLVTLPCITSVAKALGVTTVAAQAMKVYREHPIFSEVVSDQEAVAALEKFVDDEKILVEPACGAALAAVYSNVIQKLQGEGKLRTPLSSLVVIVCGGSNISLAQLVALKKQLGMDGLSQ.

The residue at position 41 (K41) is an N6-(pyridoxal phosphate)lysine.

It belongs to the serine/threonine dehydratase family. Homodimer. It depends on pyridoxal 5'-phosphate as a cofactor.

It localises to the cytoplasm. The enzyme catalyses L-serine = pyruvate + NH4(+). It carries out the reaction L-threonine = 2-oxobutanoate + NH4(+). Its pathway is carbohydrate biosynthesis; gluconeogenesis. Catalyzes the pyridoxal-phosphate-dependent dehydrative deamination of L-threonine and L-serine to ammonia and alpha-ketobutyrate and pyruvate, respectively. This chain is L-serine dehydratase/L-threonine deaminase (SDS), found in Bos taurus (Bovine).